A 148-amino-acid chain; its full sequence is L-alanine exporter AlaE (148 aa).

Transmembrane regions (helical) follow at residues 18–38 (FALV…ISGM), 49–69 (VSIP…DAFI), 88–108 (LLAY…SVGA), and 115–135 (TAVA…GYFL).

This sequence belongs to the AlaE exporter family.

It is found in the cell inner membrane. In terms of biological role, exports L-alanine. This chain is L-alanine exporter AlaE, found in Yersinia enterocolitica subsp. palearctica serotype O:3 (strain DSM 13030 / CIP 106945 / Y11).